We begin with the raw amino-acid sequence, 233 residues long: Histidinol dehydrogenase (233 aa).

Substrate-binding residues include Ser31, Gln53, and His56. Residues Gln53 and His56 each coordinate Zn(2+). Catalysis depends on proton acceptor residues Glu121 and His122. The substrate site is built by His122, Asp155, Glu209, and His214. A Zn(2+)-binding site is contributed by Asp155. Position 214 (His214) interacts with Zn(2+).

Belongs to the histidinol dehydrogenase family. It depends on Zn(2+) as a cofactor.

It carries out the reaction L-histidinol + 2 NAD(+) + H2O = L-histidine + 2 NADH + 3 H(+). Its pathway is amino-acid biosynthesis; L-histidine biosynthesis; L-histidine from 5-phospho-alpha-D-ribose 1-diphosphate: step 9/9. In terms of biological role, catalyzes the sequential NAD-dependent oxidations of L-histidinol to L-histidinaldehyde and then to L-histidine. The sequence is that of Histidinol dehydrogenase (hisD) from Thiocapsa roseopersicina.